The chain runs to 270 residues: MSNQHSPQPFCLDTKLVKLLEELQEGKQFNNKNIFPEKALYLKLALDYSFFRKNLLEFCVHLDKIKGVIRPNYDTIYILCLLEVDLLNLVFTDNILEICLPRFVSREDLRVFNNTFYTYHDNRLRILQEDFSQLFKKIKTKASVLCFTVEEIFLTNQEILPQNSTVAELQKSTNKVQTNGPQRHDFIVTLEIKLNKTQITFLIGAKGTRIESLREKSGASIKIIPISDKMTAHERNHPESVQQTILISGDLYSIALAVTSIESALITLDL.

The KH domain maps to 191 to 225 (EIKLNKTQITFLIGAKGTRIESLREKSGASIKIIP).

Required for chromosome pairing and genetic recombination. MER1 may function to bring the axial elements of the synaptonemal complex corresponding to homologous chromosomes together by initiating recombination. MER1 might be responsible for regulating the MER2 gene and/or gene product. The chain is Meiotic recombination 1 protein (MER1) from Saccharomyces cerevisiae (strain ATCC 204508 / S288c) (Baker's yeast).